Reading from the N-terminus, the 355-residue chain is Guanine nucleotide-binding protein subunit alpha-14 (355 aa).

Residues 34 to 355 (RELKLLLLGT…QLNLREFNLV (322 aa)) form the G-alpha domain. Residues 37–50 (KLLLLGTGESGKST) form a G1 motif region. GTP is bound by residues 42 to 49 (GTGESGKS), 176 to 182 (LRVRVPT), 201 to 205 (DVGGQ), 270 to 273 (NKKD), and A327. S49 serves as a coordination point for Mg(2+). The interval 174-182 (DVLRVRVPT) is G2 motif. R179 carries the ADP-ribosylarginine; by cholera toxin modification. T182 lines the Mg(2+) pocket. The segment at 197–206 (FRMVDVGGQR) is G3 motif. The interval 266-273 (ILFLNKKD) is G4 motif. The interval 325–330 (TCATDT) is G5 motif.

The protein belongs to the G-alpha family. G(q) subfamily. G proteins are composed of 3 units; alpha, beta and gamma. The alpha chain contains the guanine nucleotide binding site.

In terms of biological role, guanine nucleotide-binding proteins (G proteins) are involved as modulators or transducers in various transmembrane signaling systems. This chain is Guanine nucleotide-binding protein subunit alpha-14 (GNA14), found in Homo sapiens (Human).